The following is a 171-amino-acid chain: MGEVSAIVLAASQAAEEGGESSNFLIPNGTFFVVLAIFLVVLAVIGTFVVPPILKVLRERDAMVAKTLADNKKSDEQFAAAQADYDEAMTEARVQASSLRDNARADGRKVIEDARVRAEQQVASTLQTAHEQLKRERDAVELDLRAHVGTMSATLASRILGVDLTASAATR.

Residues 31–51 traverse the membrane as a helical segment; that stretch reads FFVVLAIFLVVLAVIGTFVVP.

The protein belongs to the ATPase B chain family. As to quaternary structure, F-type ATPases have 2 components, F(1) - the catalytic core - and F(0) - the membrane proton channel. F(1) has five subunits: alpha(3), beta(3), gamma(1), delta(1), epsilon(1). F(0) has three main subunits: a(1), b(2) and c(10-14). The alpha and beta chains form an alternating ring which encloses part of the gamma chain. F(1) is attached to F(0) by a central stalk formed by the gamma and epsilon chains, while a peripheral stalk is formed by the delta and b chains.

The protein localises to the cell membrane. Its function is as follows. F(1)F(0) ATP synthase produces ATP from ADP in the presence of a proton or sodium gradient. F-type ATPases consist of two structural domains, F(1) containing the extramembraneous catalytic core and F(0) containing the membrane proton channel, linked together by a central stalk and a peripheral stalk. During catalysis, ATP synthesis in the catalytic domain of F(1) is coupled via a rotary mechanism of the central stalk subunits to proton translocation. Component of the F(0) channel, it forms part of the peripheral stalk, linking F(1) to F(0). The sequence is that of ATP synthase subunit b from Mycobacterium bovis (strain ATCC BAA-935 / AF2122/97).